The chain runs to 161 residues: Peroxynitrite isomerase 1 (161 aa).

A GXWXGXG motif is present at residues 17-23 (GTWTGRG). Residue histidine 152 coordinates heme b.

Belongs to the nitrobindin family. Homodimer. The cofactor is heme b.

The enzyme catalyses peroxynitrite = nitrate. It functions in the pathway nitrogen metabolism. In terms of biological role, heme-binding protein able to scavenge peroxynitrite and to protect free L-tyrosine against peroxynitrite-mediated nitration, by acting as a peroxynitrite isomerase that converts peroxynitrite to nitrate. Therefore, this protein likely plays a role in peroxynitrite sensing and in the detoxification of reactive nitrogen and oxygen species (RNS and ROS, respectively). Is able to bind nitric oxide (NO) in vitro, but may act as a sensor of peroxynitrite levels in vivo. This chain is Peroxynitrite isomerase 1, found in Mycolicibacterium paratuberculosis (strain ATCC BAA-968 / K-10) (Mycobacterium paratuberculosis).